Consider the following 456-residue polypeptide: UPF0210 protein Dde_3704 (456 aa).

Belongs to the UPF0210 family. As to quaternary structure, homodimer.

The protein is UPF0210 protein Dde_3704 of Oleidesulfovibrio alaskensis (strain ATCC BAA-1058 / DSM 17464 / G20) (Desulfovibrio alaskensis).